The primary structure comprises 130 residues: Con-Ins M1 (130 aa).

The first 21 residues, 1–21, serve as a signal peptide directing secretion; the sequence is MTTSSYFLLVALGLLLYVCQS. 4 disulfide bridges follow: C29/C107, C41/C110, C53/C123, and C109/C114. P34 bears the 4-hydroxyproline; partial mark. A propeptide spans 59–92 (c peptide); the sequence is AHGGTNDARATTGRALSLSKRRGFLSMLKRRGKR. E118 carries the 4-carboxyglutamate; partial modification. S129 bears the Serine amide mark.

This sequence belongs to the insulin family. In terms of assembly, heterodimer of A and B chains; disulfide-linked. Expressed by the venom gland.

It localises to the secreted. Its function is as follows. This venom insulin facilitates prey capture by rapidly inducing hypoglycemic shock. Intraperitoneal injection of this peptide into zebrafish lowers blood glucose with the same potency than human insulin. In vivo, when applied to water, this peptide reduces overall locomotor activity of zebrafish larvae, observed as a significant decrease in the percentage of time spent swimming and movement frequency. This is Con-Ins M1 from Conus marmoreus (Marble cone).